Consider the following 182-residue polypeptide: CDP-diacylglycerol--glycerol-3-phosphate 3-phosphatidyltransferase (182 aa).

The Cytoplasmic portion of the chain corresponds to 2–12 (QFNIPTLLTLF). A helical membrane pass occupies residues 13–37 (RVILIPFLVVVFYLPFAWAPMVSAL). Over 38–60 (IFCIAAITDWFDGFLARRWNQST) the chain is Periplasmic. A helical membrane pass occupies residues 61 to 81 (RFGAFLDPVADKVLVAIAMVL). The Cytoplasmic segment spans residues 82 to 86 (VTEHY). The chain crosses the membrane as a helical span at residues 87-107 (HSWWVTLPAATMIAREIIISA). The Periplasmic portion of the chain corresponds to 108–145 (LREWMAELGKRSSVAVSWIGKVKTTAQMVALAWLLWRP). Residues 146 to 168 (NIWVEYAGIALFFVAAVLTLWSM) traverse the membrane as a helical segment. The Cytoplasmic segment spans residues 169-181 (LQYLSAARGDLLD).

Belongs to the CDP-alcohol phosphatidyltransferase class-I family.

It is found in the cell inner membrane. It catalyses the reaction a CDP-1,2-diacyl-sn-glycerol + sn-glycerol 3-phosphate = a 1,2-diacyl-sn-glycero-3-phospho-(1'-sn-glycero-3'-phosphate) + CMP + H(+). It functions in the pathway phospholipid metabolism; phosphatidylglycerol biosynthesis; phosphatidylglycerol from CDP-diacylglycerol: step 1/2. Its function is as follows. Catalyzes the conversion of cytidine diphosphate diacylglycerol (CDP-DG) and glycerol 3-phosphate into phosphatidylglycerol. Essential for the synthesis of anionic phospholipids, thereby playing a role in balancing the ratio of zwitterionic and anionic phospholipids, which is thought to be important for normal membrane function. The chain is CDP-diacylglycerol--glycerol-3-phosphate 3-phosphatidyltransferase from Salmonella choleraesuis (strain SC-B67).